Reading from the N-terminus, the 819-residue chain is MSDEDADEYDDQSSISSVSDDDDFSGSESESYQDTTESTGPSEATTDEMLWGRRRAPVCGIAAQAVRRQILMNQQHEPNVLGNNKKVYQTFGSTPQLANERHKEMYSQIRRGDDSSFRSRDRFVPPRRPRMGYGSSDLSAIEEMSPIRSSTYSSSSEAHRLSSLRAQTEWKPQLTSTTTSFQPLSPMNHHDKENGPFKAPMSPVCSSTPRSQRMYRKNPKYRRQFGSSLQLSESRLEESTSQESERAVTPESWMEHNNENEHPDQMMFAKPKQGSFPRPEAFGLDNAYAKHKDIRGIIFLSMSLCGRRLTLNVQNAAYFCSAARPTSVCSYVSAVLCHRPSSQSSSSSRQYRQRPDECYRTRLVTNCNSPSFDESFYFTFSENCVRDLLIVTVYEMDSNNAEKKRILGCMTFPVSRILKKASQVVGDPFPHYRRQDPMEDVEINNEGFFLLNKDQGRKQNFPQRKVRRQTFYEDPAFTGVSSAGSSVISNNTGGQMTMASPRLSVPNELTMGDYYRSTGSSDMRGRSTNNLLDYTSASSSTNGSAGGPEKLKLHRATLPSITTTTSENNSDDAKSLSPEQSPTDHHFLCPDDNGGVYGAGPAHSAIKKSSVRRAASFTFSPKHSSSKTNLRQLNGREEDKEKKRFLGPISRTLSYLRSKMDLALSTSSLYPSRDDVRQWEISFESLLNNKFGCALFRQFLKKEFSDENMDFWLECEEFKKMKDGKKSTTQKAIEIYSEFVAEHSPKEVNLDSDTRAATKAAVEAGCKPDTFALAQSRVEQLMSKDSYRRFLRDRLFLDLLESYEITDKEDKPSSSKDKN.

Residues 1-11 (MSDEDADEYDD) are compositionally biased toward acidic residues. Disordered regions lie at residues 1-51 (MSDE…EMLW), 112-135 (GDDS…GYGS), and 149-259 (SSTY…HNNE). Residues 32–44 (YQDTTESTGPSEA) are compositionally biased toward polar residues. Basic and acidic residues predominate over residues 112–124 (GDDSSFRSRDRFV). The span at 149–166 (SSTYSSSSEAHRLSSLRA) shows a compositional bias: low complexity. The segment covering 173–185 (QLTSTTTSFQPLS) has biased composition (polar residues). Residues 213-223 (RMYRKNPKYRR) show a composition bias toward basic residues. Over residues 234-259 (SRLEESTSQESERAVTPESWMEHNNE) the composition is skewed to basic and acidic residues. Residues 290 to 429 (KHKDIRGIIF…KASQVVGDPF (140 aa)) enclose the C2 domain. 2 disordered regions span residues 515–594 (YRST…DDNG) and 617–640 (FTFS…EEDK). 3 stretches are compositionally biased toward polar residues: residues 517–533 (STGS…NLLD), 559–568 (PSITTTTSEN), and 617–632 (FTFS…NLRQ). An RGS domain is found at 682–800 (SFESLLNNKF…LRDRLFLDLL (119 aa)).

Interacts with egl-30.

In terms of biological role, inhibits signal transduction by increasing the GTPase activity of G protein alpha subunit egl-30 (G-alpha(q)), thereby driving it into its inactive GDP-bound form. May organize egl-30 into a stable multiprotein signaling complex, and thereby persistently inhibit egl-30 when triggered by calcium or phospholipids. This chain is Regulator of G-protein signaling rgs-7 (rgs-7), found in Caenorhabditis elegans.